The following is a 189-amino-acid chain: Protein C1orf43 homolog (189 aa).

The chain crosses the membrane as a helical span at residues 11-31 (VNVVLVMAYGSLVFVLLFIFV).

The protein resides in the membrane. It is found in the golgi apparatus. It localises to the mitochondrion. General regulator of phagocytosis. Required to uptake Gram negative bacterium by macrophages. In Pongo abelii (Sumatran orangutan), this protein is Protein C1orf43 homolog.